Consider the following 871-residue polypeptide: Tegument protein UL47 homolog (871 aa).

Residues 1–212 (MDQHHGARGG…DEDDMEVIRD (212 aa)) form a disordered region. The short motif at 13-33 (IRRPRRSIESRSHPFRATGNT) is the Nuclear localization signal element. Polar residues-rich tracts occupy residues 30–41 (TGNTQRTYSTPR) and 59–81 (EQASNQDESSNPSTSNAQQSTSF). 3 stretches are compositionally biased toward acidic residues: residues 114 to 134 (SSSEEEEEEGPAQAPLDEEDQ), 146 to 155 (SSDENDEEED), and 185 to 207 (SESETDIDAEEEEEDDEDDEDDM).

It belongs to the alphaherpesvirinae HHV-1 UL47 family. As to quaternary structure, interacts with US3 kinase. Interacts with UL31 and UL34; these interactions seem important for efficient virion nuclear egress. Interacts with UL41/VHS. Phosphorylated by US3. This phosphorylation is required for proper nuclear localization.

The protein resides in the virion tegument. It is found in the host nucleus. Its subcellular location is the host cytoplasm. Functionally, tegument protein that can bind to various RNA transcripts. Plays a role in the attenuation of selective viral and cellular mRNA degradation by modulating the activity of host shutoff RNase UL41/VHS. Also plays a role in the primary envelopment of virions in the perinuclear space, probably by interacting with two nuclear egress proteins UL31 and UL34. The chain is Tegument protein UL47 homolog from Equine herpesvirus 1 (strain V592) (EHV-1).